A 678-amino-acid polypeptide reads, in one-letter code: NADPH--cytochrome P450 reductase (678 aa).

Residue Gly2 is modified to N-acetylglycine. The Lumenal segment spans residues 2-21 (GDSHVDTGATSTEAVAEEVS). The chain crosses the membrane as a helical span at residues 22-42 (LFSMTDMILLSVLVGFLTYFF). Residues 43–678 (LFRKKKEEIP…KGRYSLDVWS (636 aa)) lie on the Cytoplasmic side of the membrane. Ser63 bears the Phosphoserine mark. Residues 80-224 (IIVFYGSQTG…DFITWREQFW (145 aa)) enclose the Flavodoxin-like domain. FMN contacts are provided by residues 86–91 (SQTGTA), 138–141 (ATYG), 173–182 (LGNKTYEHFN), and Asp208. In terms of domain architecture, FAD-binding FR-type spans 279–521 (KNPFLAAVTT…FVRKSQFRLP (243 aa)). NADP(+) is bound at residue Arg298. Residues Arg424, 454–457 (RYYS), 472–474 (CAV), Tyr478, and 488–491 (GVAT) contribute to the FAD site. NADP(+) is bound by residues Thr535, 596–597 (SR), 602–606 (KVYVQ), and Asp639. FAD is bound at residue Trp677.

It belongs to the NADPH--cytochrome P450 reductase family. In the N-terminal section; belongs to the flavodoxin family. This sequence in the C-terminal section; belongs to the flavoprotein pyridine nucleotide cytochrome reductase family. It depends on FAD as a cofactor. The cofactor is FMN.

Its subcellular location is the endoplasmic reticulum membrane. It carries out the reaction 2 oxidized [cytochrome P450] + NADPH = 2 reduced [cytochrome P450] + NADP(+) + H(+). In terms of biological role, this enzyme is required for electron transfer from NADP to cytochrome P450 in microsomes. It can also provide electron transfer to heme oxygenase and cytochrome B5. The polypeptide is NADPH--cytochrome P450 reductase (Cavia porcellus (Guinea pig)).